The sequence spans 409 residues: Serine/threonine transporter SstT (409 aa).

The next 9 membrane-spanning stretches (helical) occupy residues 24-44 (LALG…AGLF), 48-68 (FVGA…AATI), 82-102 (IIVL…IAGM), 142-162 (AIAN…GAAL), 194-214 (LGIF…ALAG), 218-238 (LLAV…PAIV), 292-312 (IPLG…VLAM), 319-339 (GIQV…VSAC), and 365-385 (VAMQ…SAET).

Belongs to the dicarboxylate/amino acid:cation symporter (DAACS) (TC 2.A.23) family.

It localises to the cell inner membrane. The enzyme catalyses L-serine(in) + Na(+)(in) = L-serine(out) + Na(+)(out). It catalyses the reaction L-threonine(in) + Na(+)(in) = L-threonine(out) + Na(+)(out). Functionally, involved in the import of serine and threonine into the cell, with the concomitant import of sodium (symport system). This is Serine/threonine transporter SstT from Neisseria meningitidis serogroup C / serotype 2a (strain ATCC 700532 / DSM 15464 / FAM18).